The following is a 491-amino-acid chain: N-succinylglutamate 5-semialdehyde dehydrogenase (491 aa).

223-228 serves as a coordination point for NAD(+); that stretch reads GSANTG. Active-site residues include glutamate 246 and cysteine 280.

The protein belongs to the aldehyde dehydrogenase family. AstD subfamily.

It catalyses the reaction N-succinyl-L-glutamate 5-semialdehyde + NAD(+) + H2O = N-succinyl-L-glutamate + NADH + 2 H(+). It functions in the pathway amino-acid degradation; L-arginine degradation via AST pathway; L-glutamate and succinate from L-arginine: step 4/5. Catalyzes the NAD-dependent reduction of succinylglutamate semialdehyde into succinylglutamate. In Photorhabdus laumondii subsp. laumondii (strain DSM 15139 / CIP 105565 / TT01) (Photorhabdus luminescens subsp. laumondii), this protein is N-succinylglutamate 5-semialdehyde dehydrogenase.